A 129-amino-acid chain; its full sequence is Large ribosomal subunit protein uL14m (129 aa).

This sequence belongs to the universal ribosomal protein uL14 family.

Its subcellular location is the mitochondrion. This is Large ribosomal subunit protein uL14m (RPL14) from Acanthamoeba castellanii (Amoeba).